The chain runs to 365 residues: Class E basic helix-loop-helix protein 22 (365 aa).

3 disordered regions span residues 34–93, 134–156, and 188–225; these read AFRS…GGGG, GRGS…DGRC, and HLHG…KEQK. Over residues 82–93 the composition is skewed to gly residues; the sequence is GGGGAGGGGGGG. The span at 191–216 shows a compositional bias: gly residues; that stretch reads GGAGLPPGGSTGSGGGGSGGGGGGGS. In terms of domain architecture, bHLH spans 226–280; the sequence is ALRLNINARERRRMHDLNDALDELRAVIPYAHSPSVRKLSKIATLLLAKNYILMQ.

In terms of assembly, heterodimer with other bHLH proteins, like TCF3/E47. As to expression, kidney, lung, brain and pancreas (insulinoma).

The protein resides in the nucleus. Functionally, inhibits DNA binding of TCF3/E47 homodimers and TCF3 (E47)/NEUROD1 heterodimers and acts as a strong repressor of Neurod1 and Myod-responsive genes, probably by heterodimerization with class a basic helix-loop-helix factors. Despite the presence of an intact basic domain, does not bind to DNA. The chain is Class E basic helix-loop-helix protein 22 (BHLHE22) from Mesocricetus auratus (Golden hamster).